We begin with the raw amino-acid sequence, 335 residues long: Holliday junction branch migration complex subunit RuvB (335 aa).

The segment at 4–184 (ADRLVSAEVL…FGIVQRLEFY (181 aa)) is large ATPase domain (RuvB-L). ATP is bound by residues I23, R24, G65, K68, T69, T70, 131 to 133 (EDY), R174, Y184, and R221. Mg(2+) is bound at residue T69. Residues 185–255 (NVDDLQSIVS…IATRALDMLS (71 aa)) form a small ATPAse domain (RuvB-S) region. The interval 258–335 (AAGFDYLDRK…RHFGMVRNQE (78 aa)) is head domain (RuvB-H). DNA-binding residues include R294, R313, and R318.

Belongs to the RuvB family. Homohexamer. Forms an RuvA(8)-RuvB(12)-Holliday junction (HJ) complex. HJ DNA is sandwiched between 2 RuvA tetramers; dsDNA enters through RuvA and exits via RuvB. An RuvB hexamer assembles on each DNA strand where it exits the tetramer. Each RuvB hexamer is contacted by two RuvA subunits (via domain III) on 2 adjacent RuvB subunits; this complex drives branch migration. In the full resolvosome a probable DNA-RuvA(4)-RuvB(12)-RuvC(2) complex forms which resolves the HJ.

The protein localises to the cytoplasm. It carries out the reaction ATP + H2O = ADP + phosphate + H(+). In terms of biological role, the RuvA-RuvB-RuvC complex processes Holliday junction (HJ) DNA during genetic recombination and DNA repair, while the RuvA-RuvB complex plays an important role in the rescue of blocked DNA replication forks via replication fork reversal (RFR). RuvA specifically binds to HJ cruciform DNA, conferring on it an open structure. The RuvB hexamer acts as an ATP-dependent pump, pulling dsDNA into and through the RuvAB complex. RuvB forms 2 homohexamers on either side of HJ DNA bound by 1 or 2 RuvA tetramers; 4 subunits per hexamer contact DNA at a time. Coordinated motions by a converter formed by DNA-disengaged RuvB subunits stimulates ATP hydrolysis and nucleotide exchange. Immobilization of the converter enables RuvB to convert the ATP-contained energy into a lever motion, pulling 2 nucleotides of DNA out of the RuvA tetramer per ATP hydrolyzed, thus driving DNA branch migration. The RuvB motors rotate together with the DNA substrate, which together with the progressing nucleotide cycle form the mechanistic basis for DNA recombination by continuous HJ branch migration. Branch migration allows RuvC to scan DNA until it finds its consensus sequence, where it cleaves and resolves cruciform DNA. The chain is Holliday junction branch migration complex subunit RuvB from Photorhabdus laumondii subsp. laumondii (strain DSM 15139 / CIP 105565 / TT01) (Photorhabdus luminescens subsp. laumondii).